The chain runs to 331 residues: MSEMLFFVITTIVKAVVILAVMASLAGLATYAERKVLAYMQRRVGPDMVGPAGVLQIVADMIKLFTKEDIVPANANKFIFLIAPLISAIAAFAALAPVPFLPEFEVFGHTIRPILADINVGVLYIAGVAAVCVFSPLAAGLASYNKFALISAARAVVALLSFEVVAGMALLSVVMVTSSLSLVDINNYQKGIFNWLIFKQPLAFVLFVMASFVECNRTPFCLTENETEIVAGYGTEYSGMRWAMFFIGEYTNMIAASIIITLLFLGGFNEFLFIPGALMIILKSSLVFFFFLWTRASWPHLRVDQLSMLCWKILLPLGILNVVITGFALLI.

A run of 9 helical transmembrane segments spans residues 5–25 (LFFV…MASL), 45–65 (GPDM…IKLF), 78–98 (FIFL…LAPV), 122–142 (VLYI…AGLA), 156–176 (VVAL…VVMV), 192–212 (IFNW…MASF), 245–265 (FFIG…LLFL), 271–291 (FLFI…FFFF), and 311–331 (WKIL…ALLI).

This sequence belongs to the complex I subunit 1 family. NDH-1 is composed of 14 different subunits. Subunits NuoA, H, J, K, L, M, N constitute the membrane sector of the complex.

It localises to the cell inner membrane. The catalysed reaction is a quinone + NADH + 5 H(+)(in) = a quinol + NAD(+) + 4 H(+)(out). Functionally, NDH-1 shuttles electrons from NADH, via FMN and iron-sulfur (Fe-S) centers, to quinones in the respiratory chain. The immediate electron acceptor for the enzyme in this species is believed to be ubiquinone. Couples the redox reaction to proton translocation (for every two electrons transferred, four hydrogen ions are translocated across the cytoplasmic membrane), and thus conserves the redox energy in a proton gradient. This subunit may bind ubiquinone. This is NADH-quinone oxidoreductase subunit H from Campylobacter concisus (strain 13826).